The chain runs to 256 residues: Sorbitol dehydrogenase (256 aa).

NAD(+) is bound by residues 15–17 (RGI), Asp-36, 59–60 (DV), Asn-86, Tyr-152, Lys-156, and 182–187 (PGVVDG). Tyr-152 functions as the Proton acceptor in the catalytic mechanism.

It belongs to the short-chain dehydrogenases/reductases (SDR) family. In terms of assembly, homodimer. May function as a tetramer in vivo.

The enzyme catalyses keto-D-fructose + NADH + H(+) = D-sorbitol + NAD(+). The catalysed reaction is galactitol + NAD(+) = keto-D-tagatose + NADH + H(+). It carries out the reaction L-iditol + NAD(+) = keto-L-sorbose + NADH + H(+). Inhibited by DTT, N-bromosuccinimide and iodoacetic acid. Functionally, catalyzes the oxidation of D-sorbitol (D-glucitol) to D-fructose. Can also catalyze the oxidation of galactitol to D-tagatose and the oxidation of L-iditol, with lower efficiency. The chain is Sorbitol dehydrogenase (polS) from Cereibacter sphaeroides (Rhodobacter sphaeroides).